Reading from the N-terminus, the 221-residue chain is MGRFRGGLRCIKYLLLGFNLLFWLAGSAVIAFGLWFRFGGTMKDLSSEDKSPEYFYVGLYVLVGAGALMMTVGFFGCCGAMRESQCVLGSFFTCLLVIFAAEVTTGVFAFIGKDVAIRHVQSMYEEAYSDYLKDRARGNGTLITFHSAFQCCGKESSEQVQPTCPKELPGHKNCIDKIETVISAKLQLIGIVGIGIAGLTIFGMIFSMVLCCAIRNSRDVI.

Over 1–13 (MGRFRGGLRCIKY) the chain is Cytoplasmic. The helical transmembrane segment at 14 to 34 (LLLGFNLLFWLAGSAVIAFGL) threads the bilayer. Residues 35–54 (WFRFGGTMKDLSSEDKSPEY) are Extracellular-facing. A helical membrane pass occupies residues 55–75 (FYVGLYVLVGAGALMMTVGFF). At 76–90 (GCCGAMRESQCVLGS) the chain is on the cytoplasmic side. Residues 91–111 (FFTCLLVIFAAEVTTGVFAFI) traverse the membrane as a helical segment. Residues 112 to 188 (GKDVAIRHVQ…ETVISAKLQL (77 aa)) lie on the Extracellular side of the membrane. The N-linked (GlcNAc...) asparagine glycan is linked to asparagine 139. The helical transmembrane segment at 189-209 (IGIVGIGIAGLTIFGMIFSMV) threads the bilayer. Residues 210-221 (LCCAIRNSRDVI) lie on the Cytoplasmic side of the membrane.

It belongs to the tetraspanin (TM4SF) family.

The protein resides in the membrane. In terms of biological role, may play a role in signalling in oligodendrocytes in the early stages of their terminal differentiation into myelin-forming glia and may also function in stabilizing the mature sheath. This Mus musculus (Mouse) protein is Tetraspanin-2 (Tspan2).